A 541-amino-acid polypeptide reads, in one-letter code: DEAD-box ATP-dependent RNA helicase 57 (541 aa).

Residues V43–P52 are compositionally biased toward acidic residues. Positions V43 to V72 are disordered. The Q motif motif lies at E141 to R169. A Helicase ATP-binding domain is found at I172–V342. An ATP-binding site is contributed by A185–T192. Residues D289–D292 carry the DEAD box motif. Residues A370–K514 form the Helicase C-terminal domain. A disordered region spans residues K517–E541. Over residues R525–E541 the composition is skewed to basic and acidic residues.

The protein belongs to the DEAD box helicase family. DDX52/ROK1 subfamily.

The enzyme catalyses ATP + H2O = ADP + phosphate + H(+). The chain is DEAD-box ATP-dependent RNA helicase 57 (RH57) from Arabidopsis thaliana (Mouse-ear cress).